The following is a 100-amino-acid chain: NADH-quinone oxidoreductase subunit K 2 (100 aa).

Helical transmembrane passes span 4–24 (LHSY…GVLI), 29–49 (IVIF…FIAL), and 60–80 (IFVF…LALM).

The protein belongs to the complex I subunit 4L family. In terms of assembly, NDH-1 is composed of 14 different subunits. Subunits NuoA, H, J, K, L, M, N constitute the membrane sector of the complex.

Its subcellular location is the cell inner membrane. It catalyses the reaction a quinone + NADH + 5 H(+)(in) = a quinol + NAD(+) + 4 H(+)(out). Its function is as follows. NDH-1 shuttles electrons from NADH, via FMN and iron-sulfur (Fe-S) centers, to quinones in the respiratory chain. The immediate electron acceptor for the enzyme in this species is believed to be ubiquinone. Couples the redox reaction to proton translocation (for every two electrons transferred, four hydrogen ions are translocated across the cytoplasmic membrane), and thus conserves the redox energy in a proton gradient. This is NADH-quinone oxidoreductase subunit K 2 from Geobacter metallireducens (strain ATCC 53774 / DSM 7210 / GS-15).